A 924-amino-acid polypeptide reads, in one-letter code: MKFLILLFNILCLFPVLAADNHGVGPQGASGVDPITFDINSNQTGPAFLTAVEMAGVKYLQVQHGSNVNIHRLVEGNVVIWENASTPLYTGAIVTNNDGPYMAYVEVLGDPNLQFFIKSGDAWVTLSEHEYLAKLQEIRQAVHIESVFSLNMAFQLENNKYEVETHAKNGANMVTFIPRNGHICKMVYHKNVRIYKATGNDTVTSVVGFFRGLRLLLINVFSIDDNGMMSNRYFQHVDDKYVPISQKNYETGIVKLKDYKHAYHPVDLDIKDIDYTMFHLADATYHEPCFKIIPNTGFCITKLFDGDQVLYESFNPLIHCINEVHIYDRNNGSIICLHLNYSPPSYKAYLVLKDTGWEATTHPLLEEKIEELQDQRACELDVNFISDKDLYVAALTNADLNYTMVTPRPHRDVIRVSDGSEVLWYYEGLDNFLVCAWIYVSDGVASLVHLRIKDRIPANNDIYVLKGDLYWTRITKIQFTQEIKRLVKKSKKKLAPITEEDSDKHDEPPEGPGASGLPPKAPGDKEGSEGHKGPSKGSDSSKEGKKPGSGKKPGPAREHKPSKIPTLSKKPSGPKDPKHPRDPKEPRKSKSPRTASPTRRPSPKLPQLSKLPKSTSPRSPPPPTRPSSPERPEGTKIIKTSKPPSPKPPFDPSFKEKFYDDYSKAASRSKETKTTVVLDESFESILKETLPETPGTPFTTPRPVPPKRPRTPESPFEPPKDPDSPSTSPSEFFTPPESKRTRFHETPADTPLPDVTAELFKEPDVTAETKSPDEAMKRPRSPSEYEDTSPGDYPSLPMKRHRLERLRLTTTEMETDPGRMAKDASGKPVKLKRSKSFDDLTTVELAPEPKASRIVVDDEGTEADDEETHPPEERQKTEVRRRRPPKKPSKSPRPSKPKKPKKPDSAYIPSILAILVVSLIVGIL.

An N-terminal signal peptide occupies residues 1 to 19 (MKFLILLFNILCLFPVLAA). Residues 490-907 (SKKKLAPITE…KKPKKPDSAY (418 aa)) are disordered. 2 stretches are compositionally biased toward basic and acidic residues: residues 522–532 (PGDKEGSEGHK) and 573–588 (GPKD…EPRK). The segment covering 592–617 (PRTASPTRRPSPKLPQLSKLPKSTSP) has biased composition (low complexity). Residues 653–673 (SFKEKFYDDYSKAASRSKETK) are compositionally biased toward basic and acidic residues. The segment covering 724–736 (SPSTSPSEFFTPP) has biased composition (low complexity). Basic and acidic residues-rich tracts occupy residues 737 to 747 (ESKRTRFHETP), 770 to 783 (KSPD…RSPS), and 816 to 825 (DPGRMAKDAS). A compositionally biased stretch (acidic residues) spans 857 to 867 (DDEGTEADDEE). Residues 868-878 (THPPEERQKTE) are compositionally biased toward basic and acidic residues. The span at 879 to 901 (VRRRRPPKKPSKSPRPSKPKKPK) shows a compositional bias: basic residues. A lipid anchor (GPI-anchor amidated aspartate) is attached at D904. The propeptide at 905–924 (SAYIPSILAILVVSLIVGIL) is removed in mature form.

The protein localises to the cell membrane. In Theileria parva (East coast fever infection agent), this protein is 104 kDa microneme/rhoptry antigen.